A 291-amino-acid chain; its full sequence is 2-dehydro-3-deoxyphosphooctonate aldolase 2 (291 aa).

Ala2 bears the N-acetylalanine mark.

Belongs to the KdsA family. Expressed in roots, apical meristem, emerging leaves, hydathodes of young leaves, styles of mature flowers and funicules of mature siliques.

The protein localises to the cytoplasm. The catalysed reaction is D-arabinose 5-phosphate + phosphoenolpyruvate + H2O = 3-deoxy-alpha-D-manno-2-octulosonate-8-phosphate + phosphate. Catalyzes the stereospecific condensation of D-arabinose 5-phosphate and phosphoenolpyruvate to form 3-deoxy-D-manno-octulosonate 8-phosphate (KDO-8-phosphate) and inorganic phosphate. Involved in the biosynthesis of 3-deoxy-D-manno-octulosonate (KDO) which is an indispensable component of rhamnogalacturonan II (RG-II), a structurally complex pectic polysaccharide of the primary cell wall. RG-II is essential for the cell wall integrity of rapidly growing tissues and pollen tube growth and elongation. The polypeptide is 2-dehydro-3-deoxyphosphooctonate aldolase 2 (KDSA2) (Arabidopsis thaliana (Mouse-ear cress)).